We begin with the raw amino-acid sequence, 307 residues long: Bifunctional protein FolD (307 aa).

NADP(+) is bound by residues 170–172 (GRS), serine 195, and isoleucine 236.

This sequence belongs to the tetrahydrofolate dehydrogenase/cyclohydrolase family. As to quaternary structure, homodimer.

It carries out the reaction (6R)-5,10-methylene-5,6,7,8-tetrahydrofolate + NADP(+) = (6R)-5,10-methenyltetrahydrofolate + NADPH. It catalyses the reaction (6R)-5,10-methenyltetrahydrofolate + H2O = (6R)-10-formyltetrahydrofolate + H(+). The protein operates within one-carbon metabolism; tetrahydrofolate interconversion. Functionally, catalyzes the oxidation of 5,10-methylenetetrahydrofolate to 5,10-methenyltetrahydrofolate and then the hydrolysis of 5,10-methenyltetrahydrofolate to 10-formyltetrahydrofolate. This Sinorhizobium fredii (strain NBRC 101917 / NGR234) protein is Bifunctional protein FolD.